A 51-amino-acid polypeptide reads, in one-letter code: uncharacterized protein (51 aa).

This is an uncharacterized protein from Borreliella burgdorferi (strain ATCC 35210 / DSM 4680 / CIP 102532 / B31) (Borrelia burgdorferi).